Consider the following 277-residue polypeptide: L-aspartate oxidase (277 aa).

The active-site Proton donor/acceptor is Arg23. FAD is bound by residues Glu106 and 122–123 (SL). Disordered regions lie at residues 142–161 (LRRG…PPPA) and 234–277 (DYPA…ETRS). Residues 146–161 (WPPPAPPDLSPRPPPA) are compositionally biased toward pro residues.

It belongs to the FAD-dependent oxidoreductase 2 family. NadB subfamily. FAD is required as a cofactor.

It is found in the cytoplasm. The catalysed reaction is L-aspartate + O2 = iminosuccinate + H2O2. It functions in the pathway cofactor biosynthesis; NAD(+) biosynthesis; iminoaspartate from L-aspartate (oxidase route): step 1/1. Catalyzes the oxidation of L-aspartate to iminoaspartate, the first step in the de novo biosynthesis of NAD(+). The protein is L-aspartate oxidase (nadB) of Rhodospirillum rubrum.